Here is a 185-residue protein sequence, read N- to C-terminus: Ribosome-recycling factor (185 aa).

This sequence belongs to the RRF family.

Its subcellular location is the cytoplasm. Functionally, responsible for the release of ribosomes from messenger RNA at the termination of protein biosynthesis. May increase the efficiency of translation by recycling ribosomes from one round of translation to another. The protein is Ribosome-recycling factor of Idiomarina loihiensis (strain ATCC BAA-735 / DSM 15497 / L2-TR).